Consider the following 476-residue polypeptide: ATP synthase subunit beta (476 aa).

162–169 (GGAGVGKT) serves as a coordination point for ATP.

It belongs to the ATPase alpha/beta chains family. As to quaternary structure, F-type ATPases have 2 components, CF(1) - the catalytic core - and CF(0) - the membrane proton channel. CF(1) has five subunits: alpha(3), beta(3), gamma(1), delta(1), epsilon(1). CF(0) has three main subunits: a(1), b(2) and c(9-12). The alpha and beta chains form an alternating ring which encloses part of the gamma chain. CF(1) is attached to CF(0) by a central stalk formed by the gamma and epsilon chains, while a peripheral stalk is formed by the delta and b chains.

It localises to the cell membrane. It catalyses the reaction ATP + H2O + 4 H(+)(in) = ADP + phosphate + 5 H(+)(out). Functionally, produces ATP from ADP in the presence of a proton gradient across the membrane. The catalytic sites are hosted primarily by the beta subunits. The sequence is that of ATP synthase subunit beta from Mycoplasma capricolum subsp. capricolum (strain California kid / ATCC 27343 / NCTC 10154).